A 629-amino-acid polypeptide reads, in one-letter code: Hemocyanin G chain (629 aa).

The Cu cation site is built by histidine 171, histidine 175, histidine 202, histidine 322, histidine 326, and histidine 362. N-linked (GlcNAc...) asparagine glycans are attached at residues asparagine 447 and asparagine 506. Cysteines 534 and 582 form a disulfide. A glycan (N-linked (GlcNAc...) asparagine) is linked at asparagine 615.

The protein belongs to the tyrosinase family. Hemocyanin subfamily. As to quaternary structure, tarantula hemocyanin is a 24-chain polymer with seven different chains identified. As to expression, hemolymph.

The protein resides in the secreted. Its subcellular location is the extracellular space. Its function is as follows. Hemocyanins are copper-containing oxygen carriers occurring freely dissolved in the hemolymph of many mollusks and arthropods. This Aphonopelma sp. (American tarantula) protein is Hemocyanin G chain (HCG).